Consider the following 694-residue polypeptide: DNA-directed RNA polymerase subunit beta' (694 aa).

Positions 69, 71, 87, and 90 each coordinate Zn(2+). Mg(2+) is bound by residues Asp489, Asp491, and Asp493.

This sequence belongs to the RNA polymerase beta' chain family. RpoC1 subfamily. In plastids the minimal PEP RNA polymerase catalytic core is composed of four subunits: alpha, beta, beta', and beta''. When a (nuclear-encoded) sigma factor is associated with the core the holoenzyme is formed, which can initiate transcription. Requires Mg(2+) as cofactor. Zn(2+) serves as cofactor.

It localises to the plastid. Its subcellular location is the chloroplast. It catalyses the reaction RNA(n) + a ribonucleoside 5'-triphosphate = RNA(n+1) + diphosphate. Its function is as follows. DNA-dependent RNA polymerase catalyzes the transcription of DNA into RNA using the four ribonucleoside triphosphates as substrates. The protein is DNA-directed RNA polymerase subunit beta' of Gossypium barbadense (Sea Island cotton).